The primary structure comprises 153 residues: Small ribosomal subunit protein eS19 (153 aa).

The protein belongs to the eukaryotic ribosomal protein eS19 family. In terms of assembly, part of the 30S ribosomal subunit.

In terms of biological role, may be involved in maturation of the 30S ribosomal subunit. The sequence is that of Small ribosomal subunit protein eS19 from Aeropyrum pernix (strain ATCC 700893 / DSM 11879 / JCM 9820 / NBRC 100138 / K1).